Here is a 2266-residue protein sequence, read N- to C-terminus: RNA1 polyprotein (2266 aa).

Residues 566–1158 (LCTALAAGIF…AGRDYLVQNG (593 aa)) are Cytoplasmic-facing. The region spanning 751 to 917 (MKDLVELHKR…PGVIYDPENP (167 aa)) is the SF3 helicase domain. 781–788 (GQRHCGKS) contributes to the ATP binding site. Residues 1159–1179 (CGILMIAAALILILVSGWGFW) traverse the membrane as a helical segment. The Lumenal portion of the chain corresponds to 1180-1205 (KLFVGLFSGTMSLGAAITGMSAVDIK). In terms of domain architecture, Peptidase C3 spans 1229–1438 (AYARSQAGDG…WADIMPPNSL (210 aa)). Active-site for picornain 3C-like protease activity residues include histidine 1272, glutamate 1310, and cysteine 1402. A RdRp catalytic domain is found at 1715 to 1843 (NEAINCDYSG…SVSPSIASWF (129 aa)).

This sequence belongs to the nepoviruses RNA1 polyprotein family. Post-translationally, specific enzymatic cleavages by picornain 3C-like protease in vivo yield mature proteins. Picornain 3C-like protease is autocatalytically processed. In terms of processing, VPg is uridylylated by the polymerase and is covalently linked to the 5'-end of genomic RNA. This uridylylated form acts as a nucleotide-peptide primer for the polymerase.

The protein localises to the host endoplasmic reticulum lumen. The protein resides in the host endoplasmic reticulum membrane. It catalyses the reaction RNA(n) + a ribonucleoside 5'-triphosphate = RNA(n+1) + diphosphate. Functionally, picornain 3C-like protease is a thiol protease that cleaves the P1 and P2 polyproteins. The polypeptide is RNA1 polyprotein (Tomato black ring virus (strain MJ) (TBRV)).